The primary structure comprises 748 residues: Catalase-peroxidase (748 aa).

The segment at residues W92–Y238 is a cross-link (tryptophyl-tyrosyl-methioninium (Trp-Tyr) (with M-264)). The active-site Proton acceptor is the H93. The segment at residues Y238 to M264 is a cross-link (tryptophyl-tyrosyl-methioninium (Tyr-Met) (with W-92)). H279 is a binding site for heme b.

The protein belongs to the peroxidase family. Peroxidase/catalase subfamily. Homodimer or homotetramer. The cofactor is heme b. Post-translationally, formation of the three residue Trp-Tyr-Met cross-link is important for the catalase, but not the peroxidase activity of the enzyme.

The catalysed reaction is H2O2 + AH2 = A + 2 H2O. It catalyses the reaction 2 H2O2 = O2 + 2 H2O. In terms of biological role, bifunctional enzyme with both catalase and broad-spectrum peroxidase activity. This is Catalase-peroxidase from Xanthomonas axonopodis pv. citri (strain 306).